The sequence spans 159 residues: NADH-quinone oxidoreductase subunit I (159 aa).

2 consecutive 4Fe-4S ferredoxin-type domains span residues 51–80 and 90–119; these read RRYE…IEAD and TRYD…EGPN. Residues C60, C63, C66, C70, C99, C102, C105, and C109 each contribute to the [4Fe-4S] cluster site.

This sequence belongs to the complex I 23 kDa subunit family. As to quaternary structure, NDH-1 is composed of 14 different subunits. Subunits NuoA, H, J, K, L, M, N constitute the membrane sector of the complex. [4Fe-4S] cluster is required as a cofactor.

The protein localises to the cell inner membrane. The enzyme catalyses a quinone + NADH + 5 H(+)(in) = a quinol + NAD(+) + 4 H(+)(out). In terms of biological role, NDH-1 shuttles electrons from NADH, via FMN and iron-sulfur (Fe-S) centers, to quinones in the respiratory chain. The immediate electron acceptor for the enzyme in this species is believed to be ubiquinone. Couples the redox reaction to proton translocation (for every two electrons transferred, four hydrogen ions are translocated across the cytoplasmic membrane), and thus conserves the redox energy in a proton gradient. This Rickettsia massiliae (strain Mtu5) protein is NADH-quinone oxidoreductase subunit I.